The chain runs to 433 residues: Glutamate-1-semialdehyde 2,1-aminomutase (433 aa).

N6-(pyridoxal phosphate)lysine is present on lysine 270.

The protein belongs to the class-III pyridoxal-phosphate-dependent aminotransferase family. HemL subfamily. In terms of assembly, homodimer. Pyridoxal 5'-phosphate serves as cofactor.

The protein resides in the cytoplasm. The enzyme catalyses (S)-4-amino-5-oxopentanoate = 5-aminolevulinate. It participates in porphyrin-containing compound metabolism; protoporphyrin-IX biosynthesis; 5-aminolevulinate from L-glutamyl-tRNA(Glu): step 2/2. The polypeptide is Glutamate-1-semialdehyde 2,1-aminomutase (Symbiobacterium thermophilum (strain DSM 24528 / JCM 14929 / IAM 14863 / T)).